The following is a 434-amino-acid chain: UPF0597 protein CLK_1462 (434 aa).

It belongs to the UPF0597 family.

The protein is UPF0597 protein CLK_1462 of Clostridium botulinum (strain Loch Maree / Type A3).